A 430-amino-acid polypeptide reads, in one-letter code: Enolase (430 aa).

Glutamine 164 contacts (2R)-2-phosphoglycerate. Glutamate 208 functions as the Proton donor in the catalytic mechanism. The Mg(2+) site is built by aspartate 245, glutamate 288, and aspartate 315. Lysine 340, arginine 369, serine 370, and lysine 391 together coordinate (2R)-2-phosphoglycerate. Lysine 340 acts as the Proton acceptor in catalysis.

It belongs to the enolase family. Mg(2+) is required as a cofactor.

It is found in the cytoplasm. The protein resides in the secreted. Its subcellular location is the cell surface. The catalysed reaction is (2R)-2-phosphoglycerate = phosphoenolpyruvate + H2O. The protein operates within carbohydrate degradation; glycolysis; pyruvate from D-glyceraldehyde 3-phosphate: step 4/5. In terms of biological role, catalyzes the reversible conversion of 2-phosphoglycerate (2-PG) into phosphoenolpyruvate (PEP). It is essential for the degradation of carbohydrates via glycolysis. The polypeptide is Enolase (Pyrococcus furiosus (strain ATCC 43587 / DSM 3638 / JCM 8422 / Vc1)).